Here is a 353-residue protein sequence, read N- to C-terminus: Protein MGF 360-13L (353 aa).

The protein belongs to the asfivirus MGF 360 family.

In terms of biological role, plays a role in virus cell tropism, and may be required for efficient virus replication in macrophages. The chain is Protein MGF 360-13L from African swine fever virus (isolate Tick/Malawi/Lil 20-1/1983) (ASFV).